A 382-amino-acid polypeptide reads, in one-letter code: Zinc metalloproteinase nas-7 (382 aa).

The signal sequence occupies residues 1 to 18 (MLLPWIITIVTVIPATLG). The propeptide occupies 19 to 79 (HRNRVQDDEM…DIRLPRRHKR (61 aa)). The Peptidase M12A domain occupies 80–273 (NGVSRAAKLW…SKINRMYNCP (194 aa)). 5 disulfides stabilise this stretch: Cys122–Cys272, Cys144–Cys163, Cys348–Cys382, Cys355–Cys375, and Cys362–Cys379. His171 lines the Zn(2+) pocket. Glu172 is a catalytic residue. Zn(2+)-binding residues include His175 and His181. One can recognise a ShKT domain in the interval 348–382 (CEDRITVCWWTADRCRSPAIYQVMSSLCPKTCKFC).

It depends on Zn(2+) as a cofactor. Expressed in the head of adult hermaphrodites but not within pharynx cells. Expressed in pharyngeal muscles, mc cells, intestine, hypodermal seam cells, arcade cells, spermatheca, vulva and rectal epithelial cells.

It is found in the secreted. In terms of biological role, metalloprotease. The chain is Zinc metalloproteinase nas-7 (nas-7) from Caenorhabditis elegans.